A 173-amino-acid chain; its full sequence is Co-chaperone protein HscB homolog (173 aa).

Positions Cys-5–Leu-77 constitute a J domain.

The protein belongs to the HscB family. In terms of assembly, interacts with HscA and stimulates its ATPase activity.

In terms of biological role, co-chaperone involved in the maturation of iron-sulfur cluster-containing proteins. Seems to help targeting proteins to be folded toward HscA. The sequence is that of Co-chaperone protein HscB homolog from Pseudomonas aeruginosa (strain UCBPP-PA14).